Consider the following 85-residue polypeptide: UPF0181 protein YPTS_1774 (85 aa).

Positions 57–72 (DHDFDEHTESDYRRDD) are enriched in basic and acidic residues. The interval 57 to 85 (DHDFDEHTESDYRRDDEPDADDIEDLYEG) is disordered. A compositionally biased stretch (acidic residues) spans 73 to 85 (EPDADDIEDLYEG).

This sequence belongs to the UPF0181 family.

The polypeptide is UPF0181 protein YPTS_1774 (Yersinia pseudotuberculosis serotype IB (strain PB1/+)).